The sequence spans 791 residues: Protein Rf1, mitochondrial (791 aa).

A mitochondrion-targeting transit peptide spans 1-27 (MARRAASRAVGALRSDGSIQGRGGRAG). The disordered stretch occupies residues 1–31 (MARRAASRAVGALRSDGSIQGRGGRAGGSGA). Over residues 20-30 (QGRGGRAGGSG) the composition is skewed to gly residues. PPR repeat units follow at residues 86 to 120 (DLCT…GFRV), 121 to 156 (DAIA…GCIP), 157 to 194 (NVFS…GSPP), 195 to 229 (DVVS…GILP), 230 to 264 (DVVT…GVMP), 265 to 299 (DCMT…GVEP), 300 to 334 (DVVT…GLKP), 335 to 369 (EITT…GIHP), 370 to 404 (DHYV…GLNP), 405 to 439 (NAVT…GLSP), 440 to 474 (GNIV…GICL), 475 to 509 (NTIF…GVKP), 510 to 544 (NVIT…GLKP), 545 to 579 (NTVT…GVSP), 580 to 614 (DIIT…GTQI), 615 to 649 (ELST…DLKL), 650 to 684 (EART…GLVP), 685 to 719 (NYWT…GCTV), and 720 to 754 (DSGM…HFSL).

It is found in the mitochondrion. In terms of biological role, reduces the expression of the cytoplasmic male sterility (CMS)-associated mitochondrial gene ORF79, encoding a cytotoxic peptide. Can restore male fertility by blocking ORF79 production via endonucleolytic cleavage of dicistronic ATP6/ORF79 mRNA. Promotes the editing of ATP6 mRNAs independently of its cleavage function. This is Protein Rf1, mitochondrial (Rf1) from Oryza sativa subsp. indica (Rice).